A 229-amino-acid chain; its full sequence is MAKKSKQMRAALEKVDSTKAYSVEEAVALAKETNFAKFDASVEVAYNLNIDVRKADQQIRGAMVLPNGTGKTQRVLVFARGAKAEEAKAAGADFVGEDDLVAKINGGWLDFDVVIATPDMMAIVGRLGRVLGPRNLMPNPKTGTVTMDVAKAVEESKGGKITYRADKAGNVQAIIGKVSFDADKLVENFKAFHEVMVKAKPATAKGTYMTNVSITTTQGVGIKVDPSSF.

The protein belongs to the universal ribosomal protein uL1 family. In terms of assembly, part of the 50S ribosomal subunit.

In terms of biological role, binds directly to 23S rRNA. The L1 stalk is quite mobile in the ribosome, and is involved in E site tRNA release. Functionally, protein L1 is also a translational repressor protein, it controls the translation of the L11 operon by binding to its mRNA. This Streptococcus equi subsp. equi (strain 4047) protein is Large ribosomal subunit protein uL1.